A 239-amino-acid chain; its full sequence is Phosphoribosylaminoimidazole-succinocarboxamide synthase (239 aa).

The protein belongs to the SAICAR synthetase family.

The catalysed reaction is 5-amino-1-(5-phospho-D-ribosyl)imidazole-4-carboxylate + L-aspartate + ATP = (2S)-2-[5-amino-1-(5-phospho-beta-D-ribosyl)imidazole-4-carboxamido]succinate + ADP + phosphate + 2 H(+). Its pathway is purine metabolism; IMP biosynthesis via de novo pathway; 5-amino-1-(5-phospho-D-ribosyl)imidazole-4-carboxamide from 5-amino-1-(5-phospho-D-ribosyl)imidazole-4-carboxylate: step 1/2. The protein is Phosphoribosylaminoimidazole-succinocarboxamide synthase of Acinetobacter baumannii (strain AB307-0294).